The following is a 235-amino-acid chain: Urease accessory protein UreF (235 aa).

It belongs to the UreF family. UreD, UreF and UreG form a complex that acts as a GTP-hydrolysis-dependent molecular chaperone, activating the urease apoprotein by helping to assemble the nickel containing metallocenter of UreC. The UreE protein probably delivers the nickel.

It localises to the cytoplasm. Required for maturation of urease via the functional incorporation of the urease nickel metallocenter. The chain is Urease accessory protein UreF from Haemophilus influenzae (strain PittEE).